Reading from the N-terminus, the 140-residue chain is Small ribosomal subunit protein uS19 (140 aa).

Belongs to the universal ribosomal protein uS19 family.

Functionally, protein S19 forms a complex with S13 that binds strongly to the 16S ribosomal RNA. The protein is Small ribosomal subunit protein uS19 (rps19) of Sulfurisphaera tokodaii (strain DSM 16993 / JCM 10545 / NBRC 100140 / 7) (Sulfolobus tokodaii).